The following is a 302-amino-acid chain: Deoxyhypusine hydroxylase (302 aa).

Met1 bears the N-acetylmethionine mark. HEAT-like PBS-type repeat units follow at residues 54 to 80 (LKHELAYCLGQMQDARAIPMLVDVLQD), 87 to 113 (VRHEAGEALGAIGDPEVLEILKQYSSD), 174 to 200 (ERYRAMFALRNAGGEEAALALAEGLHC), 205 to 231 (FRHEVGYVLGQLQHEAAVPQLAAALAR), and 238 to 264 (VRHECAEALGAIARPACLAALQAHADD). Fe cation contacts are provided by His56, His89, and Glu90. Fe cation-binding residues include His207, His240, and Glu241.

It belongs to the deoxyhypusine hydroxylase family. Fe(2+) serves as cofactor.

It carries out the reaction [eIF5A protein]-deoxyhypusine + AH2 + O2 = [eIF5A protein]-hypusine + A + H2O. It participates in protein modification; eIF5A hypusination. In terms of biological role, catalyzes the hydroxylation of the N(6)-(4-aminobutyl)-L-lysine intermediate produced by deoxyhypusine synthase/DHPS on a critical lysine of the eukaryotic translation initiation factor 5A/eIF-5A. This is the second step of the post-translational modification of that lysine into an unusual amino acid residue named hypusine. Hypusination is unique to mature eIF-5A factor and is essential for its function. In Homo sapiens (Human), this protein is Deoxyhypusine hydroxylase.